The primary structure comprises 328 residues: D-cysteine desulfhydrase (328 aa).

Residue K51 is modified to N6-(pyridoxal phosphate)lysine.

This sequence belongs to the ACC deaminase/D-cysteine desulfhydrase family. Homodimer. It depends on pyridoxal 5'-phosphate as a cofactor.

The enzyme catalyses D-cysteine + H2O = hydrogen sulfide + pyruvate + NH4(+) + H(+). Its function is as follows. Catalyzes the alpha,beta-elimination reaction of D-cysteine and of several D-cysteine derivatives. It could be a defense mechanism against D-cysteine. The protein is D-cysteine desulfhydrase of Salmonella choleraesuis (strain SC-B67).